The following is a 212-amino-acid chain: Imidazole glycerol phosphate synthase subunit HisH (212 aa).

One can recognise a Glutamine amidotransferase type-1 domain in the interval R2 to S212. Residue C85 is the Nucleophile of the active site. Catalysis depends on residues H192 and E194.

In terms of assembly, heterodimer of HisH and HisF.

It is found in the cytoplasm. It catalyses the reaction 5-[(5-phospho-1-deoxy-D-ribulos-1-ylimino)methylamino]-1-(5-phospho-beta-D-ribosyl)imidazole-4-carboxamide + L-glutamine = D-erythro-1-(imidazol-4-yl)glycerol 3-phosphate + 5-amino-1-(5-phospho-beta-D-ribosyl)imidazole-4-carboxamide + L-glutamate + H(+). It carries out the reaction L-glutamine + H2O = L-glutamate + NH4(+). It functions in the pathway amino-acid biosynthesis; L-histidine biosynthesis; L-histidine from 5-phospho-alpha-D-ribose 1-diphosphate: step 5/9. Its function is as follows. IGPS catalyzes the conversion of PRFAR and glutamine to IGP, AICAR and glutamate. The HisH subunit catalyzes the hydrolysis of glutamine to glutamate and ammonia as part of the synthesis of IGP and AICAR. The resulting ammonia molecule is channeled to the active site of HisF. The polypeptide is Imidazole glycerol phosphate synthase subunit HisH (Gluconobacter oxydans (strain 621H) (Gluconobacter suboxydans)).